A 273-amino-acid polypeptide reads, in one-letter code: Nicotinamide N-methyltransferase (273 aa).

S-adenosyl-L-methionine-binding positions include Tyr35, Tyr40, 74 to 75, Tyr80, Asp96, Asn101, and 152 to 153; these read GA and NV.

It belongs to the class I-like SAM-binding methyltransferase superfamily. NNMT/PNMT/TEMT family.

The catalysed reaction is nicotinamide + S-adenosyl-L-methionine = 1-methylnicotinamide + S-adenosyl-L-homocysteine. Catalyzes the N-methylation of nicotinamide and other pyridines to form pyridinium ions. Involved in regulation of lifespan extension downstream of the sirtuin sir-2.1, probably through its role in nicotinic acid metabolism. The protein is Nicotinamide N-methyltransferase of Caenorhabditis elegans.